Reading from the N-terminus, the 78-residue chain is U29-theraphotoxin-Cg1a (78 aa).

The N-terminal stretch at M1 to P19 is a signal peptide. Intrachain disulfides connect C42-C56, C49-C60, C55-C77, and C67-C73.

Belongs to the neurotoxin 13 (insecticidal toxin ABC) family. 03 (JZTX-59) subfamily. Expressed by the venom gland.

It is found in the secreted. Its function is as follows. Probable ion channel inhibitor. The polypeptide is U29-theraphotoxin-Cg1a (Chilobrachys guangxiensis (Chinese earth tiger tarantula)).